We begin with the raw amino-acid sequence, 358 residues long: Phospho-N-acetylmuramoyl-pentapeptide-transferase (358 aa).

A run of 10 helical transmembrane segments spans residues 3-23 (QILF…PALI), 54-74 (GVAI…IGIA), 84-104 (ALLV…DDFI), 114-134 (LTAA…GVLA), 156-176 (ITTV…VVVA), 187-207 (LDGL…IITF), 231-251 (LALV…WNAA), 255-275 (IFMG…LSIT), 283-303 (VVIG…VAVF), and 330-350 (VIIR…GLFY).

Belongs to the glycosyltransferase 4 family. MraY subfamily. Mg(2+) serves as cofactor.

It is found in the cell membrane. The enzyme catalyses UDP-N-acetyl-alpha-D-muramoyl-L-alanyl-gamma-D-glutamyl-meso-2,6-diaminopimeloyl-D-alanyl-D-alanine + di-trans,octa-cis-undecaprenyl phosphate = di-trans,octa-cis-undecaprenyl diphospho-N-acetyl-alpha-D-muramoyl-L-alanyl-D-glutamyl-meso-2,6-diaminopimeloyl-D-alanyl-D-alanine + UMP. The protein operates within cell wall biogenesis; peptidoglycan biosynthesis. Functionally, catalyzes the initial step of the lipid cycle reactions in the biosynthesis of the cell wall peptidoglycan: transfers peptidoglycan precursor phospho-MurNAc-pentapeptide from UDP-MurNAc-pentapeptide onto the lipid carrier undecaprenyl phosphate, yielding undecaprenyl-pyrophosphoryl-MurNAc-pentapeptide, known as lipid I. This is Phospho-N-acetylmuramoyl-pentapeptide-transferase from Nocardia farcinica (strain IFM 10152).